A 154-amino-acid polypeptide reads, in one-letter code: Style cell-cycle inhibitor 1-A (154 aa).

Composition is skewed to basic and acidic residues over residues 1 to 11 (MGSDKKTPEEK) and 24 to 48 (DEVKSKRQNIKGDEERRKEKKDKSK). The disordered stretch occupies residues 1 to 84 (MGSDKKTPEE…DKSKNKFEEL (84 aa)). Basic residues predominate over residues 63–77 (GEKHKTKSHKHKDKS).

Specifically expressed in flowers pistils, especially in stigmas and styles. Barely detected in roots, stems, leaves, sepals, petals and stamen.

It localises to the nucleus. Component of the auxin signaling transduction pathway that regulates cell proliferation and differentiation during flowers stigmas and styles development. Involved in the regulation of auxin-related genes. The polypeptide is Style cell-cycle inhibitor 1-A (Nicotiana tabacum (Common tobacco)).